The sequence spans 473 residues: BPI fold-containing family B member 3 (473 aa).

The N-terminal stretch at 1–20 is a signal peptide; it reads MMLGVYTLLLLWGLATPCLG. Asparagine 139 carries an N-linked (GlcNAc...) asparagine glycan. Cysteine 161 and cysteine 196 are joined by a disulfide.

Belongs to the BPI/LBP/Plunc superfamily. BPI/LBP family.

The protein resides in the secreted. Its function is as follows. May have the capacity to recognize and bind specific classes of odorants. May act as a carrier molecule, transporting odorants across the mucus layer to access receptor sites. May serve as a primary defense mechanism by recognizing and removing potentially harmful odorants or pathogenic microorganisms from the mucosa or clearing excess odorant from mucus to enable new odorant stimuli to be received. The sequence is that of BPI fold-containing family B member 3 from Mus musculus (Mouse).